The chain runs to 427 residues: Serine hydroxymethyltransferase (427 aa).

Residues leucine 122 and 126 to 128 each bind (6S)-5,6,7,8-tetrahydrofolate; that span reads GHL. Lysine 231 is subject to N6-(pyridoxal phosphate)lysine. Position 355-357 (355-357) interacts with (6S)-5,6,7,8-tetrahydrofolate; sequence SPF.

It belongs to the SHMT family. Homodimer. Pyridoxal 5'-phosphate is required as a cofactor.

The protein resides in the cytoplasm. It catalyses the reaction (6R)-5,10-methylene-5,6,7,8-tetrahydrofolate + glycine + H2O = (6S)-5,6,7,8-tetrahydrofolate + L-serine. Its pathway is one-carbon metabolism; tetrahydrofolate interconversion. It functions in the pathway amino-acid biosynthesis; glycine biosynthesis; glycine from L-serine: step 1/1. Catalyzes the reversible interconversion of serine and glycine with tetrahydrofolate (THF) serving as the one-carbon carrier. This reaction serves as the major source of one-carbon groups required for the biosynthesis of purines, thymidylate, methionine, and other important biomolecules. Also exhibits THF-independent aldolase activity toward beta-hydroxyamino acids, producing glycine and aldehydes, via a retro-aldol mechanism. The sequence is that of Serine hydroxymethyltransferase from Synechococcus sp. (strain ATCC 27144 / PCC 6301 / SAUG 1402/1) (Anacystis nidulans).